We begin with the raw amino-acid sequence, 430 residues long: tRNA pseudouridine synthase Pus10 (430 aa).

Asp-253 (nucleophile) is an active-site residue. Positions 320 and 392 each coordinate substrate.

This sequence belongs to the pseudouridine synthase Pus10 family.

It carries out the reaction uridine(54) in tRNA = pseudouridine(54) in tRNA. It catalyses the reaction uridine(55) in tRNA = pseudouridine(55) in tRNA. Responsible for synthesis of pseudouridine from uracil-54 and uracil-55 in the psi GC loop of transfer RNAs. This Ignisphaera aggregans (strain DSM 17230 / JCM 13409 / AQ1.S1) protein is tRNA pseudouridine synthase Pus10.